The sequence spans 352 residues: Protein RecA (352 aa).

Position 66 to 73 (66 to 73 (GPESSGKT)) interacts with ATP. Residues 330–352 (TKDDSKVATVDKANEEQAAEPVQ) are disordered.

The protein belongs to the RecA family.

It localises to the cytoplasm. In terms of biological role, can catalyze the hydrolysis of ATP in the presence of single-stranded DNA, the ATP-dependent uptake of single-stranded DNA by duplex DNA, and the ATP-dependent hybridization of homologous single-stranded DNAs. It interacts with LexA causing its activation and leading to its autocatalytic cleavage. The sequence is that of Protein RecA from Psychrobacter cryohalolentis (strain ATCC BAA-1226 / DSM 17306 / VKM B-2378 / K5).